A 232-amino-acid polypeptide reads, in one-letter code: MTSLVITDIDGTITGDDRAVHLKCIRYLRELQKRGIPVGIATGNTLCYSRSAATLLGFEGPLIAENGGIVAVDDEEISTVPEEDIELIQEAYRELRRRLGVRRTEPPGLRRTEVAIYRDVPIEEVERVLDGLGYSGRIEVVDTGFAYHLKSKRVDKGKGLLVICERLGIDPDDVVAIGDGDNDAPLLKAAGLGVAPANATENVKRIADVVLDAENGEGVATFLRKLLEEVDA.

The active-site Nucleophile is Asp8. Mg(2+)-binding residues include Asp8 and Asp10. Lys156 contacts substrate. Mg(2+) is bound by residues Asp179 and Asp183.

This sequence belongs to the archaeal SPP-like hydrolase family. The cofactor is Mg(2+).

The catalysed reaction is 2-phosphoglycolate + H2O = glycolate + phosphate. Its function is as follows. Catalyzes the dephosphorylation of 2-phosphoglycolate. The polypeptide is Phosphoglycolate phosphatase (Methanopyrus kandleri (strain AV19 / DSM 6324 / JCM 9639 / NBRC 100938)).